A 109-amino-acid polypeptide reads, in one-letter code: Homeobox protein E60 (109 aa).

Positions 1 to 31 are disordered; that stretch reads PRTRRVKRSDGRGNGGTPEEKRPRTAFSGEQ. Positions 20 to 79 form a DNA-binding region, homeobox; the sequence is EKRPRTAFSGEQLARLKREFAENRYLTERRRQQLSRDLGLNEAQIKIWFQNKRAKIKKAS.

This sequence belongs to the engrailed homeobox family.

It is found in the nucleus. The chain is Homeobox protein E60 from Apis mellifera (Honeybee).